The primary structure comprises 74 residues: Small ribosomal subunit protein bS18 (74 aa).

The protein belongs to the bacterial ribosomal protein bS18 family. In terms of assembly, part of the 30S ribosomal subunit. Forms a tight heterodimer with protein bS6.

Its function is as follows. Binds as a heterodimer with protein bS6 to the central domain of the 16S rRNA, where it helps stabilize the platform of the 30S subunit. The protein is Small ribosomal subunit protein bS18 of Sphingopyxis alaskensis (strain DSM 13593 / LMG 18877 / RB2256) (Sphingomonas alaskensis).